We begin with the raw amino-acid sequence, 297 residues long: N-acetylmuramic acid 6-phosphate etherase (297 aa).

Residues 55-218 enclose the SIS domain; that stretch reads AAAALTRGGR…STGAMVKCGK (164 aa). The active-site Proton donor is glutamate 83. The active site involves glutamate 114.

Belongs to the GCKR-like family. MurNAc-6-P etherase subfamily. As to quaternary structure, homodimer.

The catalysed reaction is N-acetyl-D-muramate 6-phosphate + H2O = N-acetyl-D-glucosamine 6-phosphate + (R)-lactate. It functions in the pathway amino-sugar metabolism; 1,6-anhydro-N-acetylmuramate degradation. Its pathway is amino-sugar metabolism; N-acetylmuramate degradation. It participates in cell wall biogenesis; peptidoglycan recycling. Its function is as follows. Specifically catalyzes the cleavage of the D-lactyl ether substituent of MurNAc 6-phosphate, producing GlcNAc 6-phosphate and D-lactate. Together with AnmK, is also required for the utilization of anhydro-N-acetylmuramic acid (anhMurNAc) either imported from the medium or derived from its own cell wall murein, and thus plays a role in cell wall recycling. This Cronobacter sakazakii (strain ATCC BAA-894) (Enterobacter sakazakii) protein is N-acetylmuramic acid 6-phosphate etherase.